Consider the following 384-residue polypeptide: Dual-specificity RNA methyltransferase RlmN (384 aa).

Catalysis depends on glutamate 93, which acts as the Proton acceptor. In terms of domain architecture, Radical SAM core spans 99–339; it reads EDTRGTLCVS…TTIRKTRGDD (241 aa). Cysteine 106 and cysteine 344 are joined by a disulfide. [4Fe-4S] cluster is bound by residues cysteine 113, cysteine 117, and cysteine 120. Residues 170–171, serine 202, 224–226, and asparagine 301 each bind S-adenosyl-L-methionine; these read GE and SLH. Residue cysteine 344 is the S-methylcysteine intermediate of the active site.

It belongs to the radical SAM superfamily. RlmN family. [4Fe-4S] cluster is required as a cofactor.

It is found in the cytoplasm. The enzyme catalyses adenosine(2503) in 23S rRNA + 2 reduced [2Fe-2S]-[ferredoxin] + 2 S-adenosyl-L-methionine = 2-methyladenosine(2503) in 23S rRNA + 5'-deoxyadenosine + L-methionine + 2 oxidized [2Fe-2S]-[ferredoxin] + S-adenosyl-L-homocysteine. It carries out the reaction adenosine(37) in tRNA + 2 reduced [2Fe-2S]-[ferredoxin] + 2 S-adenosyl-L-methionine = 2-methyladenosine(37) in tRNA + 5'-deoxyadenosine + L-methionine + 2 oxidized [2Fe-2S]-[ferredoxin] + S-adenosyl-L-homocysteine. Its function is as follows. Specifically methylates position 2 of adenine 2503 in 23S rRNA and position 2 of adenine 37 in tRNAs. m2A2503 modification seems to play a crucial role in the proofreading step occurring at the peptidyl transferase center and thus would serve to optimize ribosomal fidelity. In Cupriavidus metallidurans (strain ATCC 43123 / DSM 2839 / NBRC 102507 / CH34) (Ralstonia metallidurans), this protein is Dual-specificity RNA methyltransferase RlmN.